A 274-amino-acid chain; its full sequence is Elongation factor Ts (274 aa).

The involved in Mg(2+) ion dislocation from EF-Tu stretch occupies residues 79-82; the sequence is TDFV.

The protein belongs to the EF-Ts family.

It is found in the cytoplasm. Its function is as follows. Associates with the EF-Tu.GDP complex and induces the exchange of GDP to GTP. It remains bound to the aminoacyl-tRNA.EF-Tu.GTP complex up to the GTP hydrolysis stage on the ribosome. This chain is Elongation factor Ts, found in Porphyromonas gingivalis (strain ATCC 33277 / DSM 20709 / CIP 103683 / JCM 12257 / NCTC 11834 / 2561).